The chain runs to 705 residues: MVYGLGEALKNLNSYCQERTTRIRNSLSPSRPSMSEATATGSSSSSRASTTIPSTPNMDVTPTVEDPRQNDNNASGMTRDEFRQYGKETVDYIVDYLENIQKRRVVPAIEPGYLKDLIPSEAPNTPESFESVMEDFEKLIMPGITHWQHPRFHAYFPAGNSFPSIIADMLSDAIGCVGFSWAACPAMTELELIMLDWFGKMIGLPAEFLPLTENGKGGGVIQSSASECNFVTLLAARFEVMKELRQRFPFVEEGLLLSKLIAYCSKEAHSSVEKACMIGMVKLRILETDSKFRLRGDTLRNAIQEDRNLGLIPFFVSTTLGTTSCCSFDVLSEIGPICKENELWLHVDAAYSGSAFICPEFRPLMNGIEYAMSFNTNPNKWLLINFDCSTMWVRDRFKLTQALVVDPLYLQHSWMDKSIDYRHWGIPLSRRFRSLKLWFVIRMYGIDGLQKYIREHVRLAKKMETLLRADAKFEIVNEVIMGLVCFRMKGDDELNQTLLTRLNASGRIHMVPASLGDRFVIRFCVCAENATDKDIEVAYEIIAQATQHVLHDSVKAVIAEEDEEAVALEEMVADLNITETPEKCLTRQNSANAAESGQKLERQLSKEEILAQKQHESLAKKRSFLVRMVSDPKCYNPKIVRHLNMANHRKMSQDLYRDRTLMQTISHSQRPNRLSQSPGSAGSAFFDDDDDRIVADVQTGLQTPI.

Over residues 22–32 (RIRNSLSPSRP) the composition is skewed to polar residues. A disordered region spans residues 22 to 81 (RIRNSLSPSRPSMSEATATGSSSSSRASTTIPSTPNMDVTPTVEDPRQNDNNASGMTRDE). Positions 33–55 (SMSEATATGSSSSSRASTTIPST) are enriched in low complexity. Lys-380 is modified (N6-(pyridoxal phosphate)lysine). A coiled-coil region spans residues 554-620 (VKAVIAEEDE…AQKQHESLAK (67 aa)). The segment covering 667 to 678 (HSQRPNRLSQSP) has biased composition (polar residues). The segment at 667–687 (HSQRPNRLSQSPGSAGSAFFD) is disordered.

The protein belongs to the group II decarboxylase family. Requires pyridoxal 5'-phosphate as cofactor. Expressed in the gonadal sheath projections in between the oocytes, in head RIM motor neurons and RIC interneurons.

It is found in the cytoplasm. It localises to the cell projection. Its subcellular location is the axon. The protein resides in the perikaryon. The catalysed reaction is L-tyrosine + H(+) = tyramine + CO2. Its function is as follows. Required for the decarboxylation of tyrosine to tyramine, a precursor of octopamine but probably also itself a neurotransmitter. Involved in the regulation of egg laying, which is inhibited by tyramine. Also involved in controlling locomotion and head movements. Due to its involvement in octopamine biosynthesis, also required for crtc-1-dependent regulation of AMPK-mediated longevity which requires octopamine signaling. The protein is Tyrosine decarboxylase of Caenorhabditis elegans.